The chain runs to 211 residues: Germin-like protein subfamily 3 member 3 (211 aa).

A signal peptide spans 1-20 (MKMIIQIFFIISLISTISFA). Residues Cys-26 and Cys-41 are joined by a disulfide bond. Residues 55–201 (TGLGTAGNTS…TTFLSDAEVK (147 aa)) enclose the Cupin type-1 domain. The N-linked (GlcNAc...) asparagine glycan is linked to Asn-62. Mn(2+) is bound by residues His-103, His-105, and Glu-110. Ser-140 is subject to Phosphoserine. Mn(2+) is bound at residue His-149.

The protein belongs to the germin family. In terms of assembly, oligomer (believed to be a pentamer but probably hexamer). As to expression, expressed in leaves and flowers.

Its subcellular location is the secreted. It localises to the extracellular space. It is found in the apoplast. May play a role in plant defense. Probably has no oxalate oxidase activity even if the active site is conserved. The sequence is that of Germin-like protein subfamily 3 member 3 (GER3) from Arabidopsis thaliana (Mouse-ear cress).